Consider the following 32-residue polypeptide: MLDPTGTYRRPRDTQDSRQKRRQDCLDPTGQY.

Residues 1–32 (MLDPTGTYRRPRDTQDSRQKRRQDCLDPTGQY) are disordered. Copy 1 of the repeat occupies 2 to 8 (LDPTGTY). The tract at residues 2 to 32 (LDPTGTYRRPRDTQDSRQKRRQDCLDPTGQY) is 2 X 7 AA repeats of L-D-P-T-G-[TQ]-Y. Residues 10-25 (RPRDTQDSRQKRRQDC) are compositionally biased toward basic and acidic residues. Repeat unit 2 spans residues 26-32 (LDPTGQY).

Its subcellular location is the cytoplasm. It is found in the nucleus. Functionally, one of four peptides (tal-1A, tal-2A, tal-3A and tal-AA) produced from a polycistronic gene that function redundantly in several developmental processes. Required in early stages of leg development for the intercalation of the tarsal segments during the mid-third instar stage and later for tarsal joint formation. Promotes the post-translational modification of ovo isoform B (svb) into its active form which in turn initiates trichome development and promotes tarsal joint development. This is likely due to recruitment of the E3 ubiquitin-protein ligase Ubr3 to svb for ubiquitination of its N-terminus, converting svb into a transcriptional activator. Also enhances interaction of Ubr3 with Diap1. Required for correct wing and leg formation through its regulation of several genes including those in the Notch signaling pathway. Essential for denticle formation and may have a role in the developmental timing of trichome differentiation. Essential for the development of taenidial folds in the trachea. This Drosophila melanogaster (Fruit fly) protein is Peptide tarsal-less AA.